Reading from the N-terminus, the 268-residue chain is Receptor expression-enhancing protein 2 (268 aa).

2 helical membrane-spanning segments follow: residues 1–21 (MVSW…YPAY) and 35–55 (YVKW…ETIT). The disordered stretch occupies residues 170 to 268 (GDDTHTAATL…TTANNVAESP (99 aa)). The segment covering 180-196 (PRAKTATRTVRATPVPA) has biased composition (low complexity). The segment covering 199–216 (ESQHSSRSDDQSDSRTEH) has biased composition (basic and acidic residues). A compositionally biased stretch (low complexity) spans 228–248 (RIAITRAAKKPAAAKTEQTTK). Residues 249–258 (TVKKAPKKKP) show a composition bias toward basic residues.

This sequence belongs to the DP1 family. As to quaternary structure, interacts with odorant receptor proteins.

The protein localises to the membrane. May enhance the cell surface expression of odorant receptors. The protein is Receptor expression-enhancing protein 2 (reep2) of Danio rerio (Zebrafish).